The sequence spans 1039 residues: Pleckstrin homology domain-containing family G member 5 (1039 aa).

2 disordered regions span residues 58-105 (NVST…RRHT) and 185-277 (PGDE…SSES). 2 stretches are compositionally biased toward basic and acidic residues: residues 185-199 (PGDE…KDSK) and 217-228 (ERVDPQSRRESS). Low complexity predominate over residues 259–277 (SSCSLPVGSSVGSSGSSES). In terms of domain architecture, DH spans 372-564 (HQQEAVWELL…ERFIHHVNTC (193 aa)). Residues 620-720 (QLLLEGSLRM…WVDTLYNAQN (101 aa)) form the PH domain. Disordered regions lie at residues 739–785 (QHLQ…ASDG) and 800–836 (TLSS…LLPL). Residues 744-757 (LEEEEDEQEEEGEE) show a composition bias toward acidic residues. Composition is skewed to polar residues over residues 758–776 (SGTS…SNSL) and 811–831 (FSSQ…TPTS). Thr-760 bears the Phosphothreonine mark. Position 765 is a phosphoserine (Ser-765). Thr-876 is modified (phosphothreonine). Phosphoserine is present on residues Ser-878, Ser-903, and Ser-908. Residues 967 to 989 (PLSESENRPSHKAGGPADSARRK) are disordered.

As to quaternary structure, interacts with GIPC1/synectin and RHOA. In terms of tissue distribution, selectively expressed in cortical and hippocampal neurons with prominent expression in the cell bodies and dendrites. Weakly expressed in rat fad pad ECs (RFPECs).

Its subcellular location is the cytoplasm. The protein resides in the perinuclear region. It is found in the cell membrane. The protein localises to the cell junction. It localises to the cell projection. Its subcellular location is the lamellipodium. Functions as a guanine exchange factor (GEF) for RAB26 and thus regulates autophagy of synaptic vesicles in axon terminal of motoneurons. Involved in the control of neuronal cell differentiation. Plays a role in angiogenesis through regulation of endothelial cells chemotaxis. Also affects the migration, adhesion, and matrix/bone degradation in macrophages and osteoclasts. The sequence is that of Pleckstrin homology domain-containing family G member 5 (Plekhg5) from Rattus norvegicus (Rat).